Consider the following 388-residue polypeptide: Succinate--CoA ligase [ADP-forming] subunit beta (388 aa).

In terms of domain architecture, ATP-grasp spans 9–245 (KELLAGYGLP…KSQENERELK (237 aa)). Residues Lys46, 53–55 (GRG), Glu100, Tyr103, and Glu108 contribute to the ATP site. Mg(2+) is bound by residues Asn200 and Asp214. Substrate contacts are provided by residues Asn265 and 322–324 (GIV).

Belongs to the succinate/malate CoA ligase beta subunit family. As to quaternary structure, heterotetramer of two alpha and two beta subunits. Mg(2+) is required as a cofactor.

It carries out the reaction succinate + ATP + CoA = succinyl-CoA + ADP + phosphate. The enzyme catalyses GTP + succinate + CoA = succinyl-CoA + GDP + phosphate. It functions in the pathway carbohydrate metabolism; tricarboxylic acid cycle; succinate from succinyl-CoA (ligase route): step 1/1. Functionally, succinyl-CoA synthetase functions in the citric acid cycle (TCA), coupling the hydrolysis of succinyl-CoA to the synthesis of either ATP or GTP and thus represents the only step of substrate-level phosphorylation in the TCA. The beta subunit provides nucleotide specificity of the enzyme and binds the substrate succinate, while the binding sites for coenzyme A and phosphate are found in the alpha subunit. The chain is Succinate--CoA ligase [ADP-forming] subunit beta from Neisseria meningitidis serogroup C / serotype 2a (strain ATCC 700532 / DSM 15464 / FAM18).